The sequence spans 406 residues: Tyrosine--tRNA ligase (406 aa).

Position 35 (Tyr35) interacts with L-tyrosine. Positions 40–49 match the 'HIGH' region motif; the sequence is PTADSLHVGH. 2 residues coordinate L-tyrosine: Tyr168 and Gln172. A 'KMSKS' region motif is present at residues 228–232; it reads KMGKT. Lys231 contributes to the ATP binding site. Residues 340-404 enclose the S4 RNA-binding domain; sequence SELLDILVEA…RGKKNYNKIV (65 aa).

It belongs to the class-I aminoacyl-tRNA synthetase family. TyrS type 1 subfamily. In terms of assembly, homodimer.

The protein localises to the cytoplasm. The enzyme catalyses tRNA(Tyr) + L-tyrosine + ATP = L-tyrosyl-tRNA(Tyr) + AMP + diphosphate + H(+). Catalyzes the attachment of tyrosine to tRNA(Tyr) in a two-step reaction: tyrosine is first activated by ATP to form Tyr-AMP and then transferred to the acceptor end of tRNA(Tyr). The chain is Tyrosine--tRNA ligase from Clostridium perfringens (strain ATCC 13124 / DSM 756 / JCM 1290 / NCIMB 6125 / NCTC 8237 / Type A).